A 257-amino-acid polypeptide reads, in one-letter code: Major prion protein (257 aa).

Positions 1-24 (MVKSHIGSWLLVLFVATWSDIGFC) are cleaved as a signal peptide. Residues 25–234 (KKRPKPGGGW…ESEAYYQRGA (210 aa)) are interaction with GRB2, ERI3 and SYN1. The interval 27-114 (RPKPGGGWNT…KPSKPKTNMK (88 aa)) is disordered. 5 tandem repeats follow at residues 54–62 (PQGGGGWGQ), 63–70 (PHGGGWGQ), 71–78 (PHGGGWGQ), 79–86 (PHGGGWGQ), and 87–95 (PHGGGGWGQ). A 5 X 8 AA tandem repeats of P-H-G-G-G-W-G-Q region spans residues 54–95 (PQGGGGWGQPHGGGWGQPHGGGWGQPHGGGWGQPHGGGGWGQ). The segment covering 55 to 101 (QGGGGWGQPHGGGWGQPHGGGWGQPHGGGWGQPHGGGGWGQGGGSHG) has biased composition (gly residues). Cu(2+) contacts are provided by H64, G65, G66, H72, G73, G74, H80, G81, G82, H88, G90, and G91. An intrachain disulfide couples C183 to C218. N185 and N201 each carry an N-linked (GlcNAc...) asparagine glycan. Residue A234 is the site of GPI-anchor amidated alanine attachment. Residues 235–257 (SAILFSPPPVILLISLLILLIVG) constitute a propeptide, removed in mature form.

This sequence belongs to the prion family. As to quaternary structure, monomer and homodimer. Has a tendency to aggregate into amyloid fibrils containing a cross-beta spine, formed by a steric zipper of superposed beta-strands. Soluble oligomers may represent an intermediate stage on the path to fibril formation. Copper binding may promote oligomerization. Interacts with GRB2, APP, ERI3/PRNPIP and SYN1. Mislocalized cytosolically exposed PrP interacts with MGRN1; this interaction alters MGRN1 subcellular location and causes lysosomal enlargement. Interacts with KIAA1191.

It localises to the cell membrane. It is found in the golgi apparatus. Its function is as follows. Its primary physiological function is unclear. Has cytoprotective activity against internal or environmental stresses. May play a role in neuronal development and synaptic plasticity. May be required for neuronal myelin sheath maintenance. May play a role in iron uptake and iron homeostasis. Soluble oligomers are toxic to cultured neuroblastoma cells and induce apoptosis (in vitro). Association with GPC1 (via its heparan sulfate chains) targets PRNP to lipid rafts. Also provides Cu(2+) or Zn(2+) for the ascorbate-mediated GPC1 deaminase degradation of its heparan sulfate side chains. In Mustela putorius furo (European domestic ferret), this protein is Major prion protein (PRNP).